We begin with the raw amino-acid sequence, 276 residues long: Protease HtpX homolog (276 aa).

The chain crosses the membrane as a helical span at residues 16–36 (LFIWFGGMIAGQTGMVIAFLV). Histidine 130 contacts Zn(2+). Glutamate 131 is an active-site residue. Residue histidine 134 coordinates Zn(2+). The next 2 helical transmembrane spans lie at 142 to 162 (IGTV…FGMF) and 173 to 193 (IFVM…IQMT). Glutamate 199 lines the Zn(2+) pocket.

Belongs to the peptidase M48B family. It depends on Zn(2+) as a cofactor.

The protein resides in the cell inner membrane. The protein is Protease HtpX homolog of Sulfurovum sp. (strain NBC37-1).